Reading from the N-terminus, the 161-residue chain is Large ribosomal subunit protein uL15 (161 aa).

The segment at 1–47 is disordered; sequence MKLHELHDNPGANRKKKRVARGPGSGKGKTAGRGIKGQTSRSGVALN. Gly residues predominate over residues 23–35; the sequence is PGSGKGKTAGRGI.

This sequence belongs to the universal ribosomal protein uL15 family. In terms of assembly, part of the 50S ribosomal subunit.

In terms of biological role, binds to the 23S rRNA. This chain is Large ribosomal subunit protein uL15, found in Paracoccus denitrificans (strain Pd 1222).